Reading from the N-terminus, the 70-residue chain is Large ribosomal subunit protein eL38 (70 aa).

This sequence belongs to the eukaryotic ribosomal protein eL38 family.

The protein is Large ribosomal subunit protein eL38 (RpL38) of Anopheles gambiae (African malaria mosquito).